A 444-amino-acid polypeptide reads, in one-letter code: Putative methylesterase 15, chloroplastic (444 aa).

Residues 1–27 (MGNSLRCISQEQDPNQKKPSSVVNGNS) show a composition bias toward polar residues. Disordered regions lie at residues 1-36 (MGNS…RRLS) and 48-91 (PSLS…DSLI). Residues 1–58 (MGNSLRCISQEQDPNQKKPSSVVNGNSSEKHVRRLSLIPSFRRRTLLPSLSCSGSSTS) constitute a chloroplast transit peptide. The span at 53 to 63 (SGSSTSSTSKK) shows a compositional bias: low complexity. Residues 64–80 (GGIKTKKKIRERHHQEQ) show a composition bias toward basic residues. The segment covering 81–90 (HHHDHEKDSL) has biased composition (basic and acidic residues). Residues 188–312 (FVLVHGGGFG…QPDSNYDLME (125 aa)) form the AB hydrolase-1 domain. D262 acts as the Acyl-ester intermediate in catalysis. Active-site charge relay system residues include D390 and H418.

The protein belongs to the AB hydrolase superfamily. Methylesterase family.

It is found in the plastid. The protein resides in the chloroplast. Its function is as follows. Putative methylesterase. The protein is Putative methylesterase 15, chloroplastic of Arabidopsis thaliana (Mouse-ear cress).